A 237-amino-acid chain; its full sequence is Concanavalin-Br (237 aa).

Residues Glu-8 and Asp-10 each coordinate Mn(2+). Ca(2+) contacts are provided by Asp-10, Tyr-12, Asn-14, and Asp-19. Tyr-12 serves as a coordination point for a carbohydrate. Mn(2+)-binding residues include Asp-19, His-24, and Ser-34. An a carbohydrate-binding site is contributed by 99 to 100; that stretch reads LY. A Ca(2+)-binding site is contributed by Asp-208. Residue Arg-228 participates in a carbohydrate binding.

This sequence belongs to the leguminous lectin family. In terms of assembly, homotetramer.

Its function is as follows. Glucose/D-mannose specific lectin. Has anti-inflammatory activity in rats. Induces histamine release in mast cells from hamster and rat. Induces lymphocyte proliferation and IFNG production. Shows toxicity against the aquatic snail B.glabrata at concentrations higher than 20 ug/ml. The polypeptide is Concanavalin-Br (Canavalia brasiliensis (Brazilian jack bean)).